Here is a 218-residue protein sequence, read N- to C-terminus: Small ribosomal subunit protein uS3c (218 aa).

In terms of domain architecture, KH type-2 spans 47 to 118 (VQKNMRISSG…RLNIAITRVA (72 aa)).

The protein belongs to the universal ribosomal protein uS3 family. As to quaternary structure, part of the 30S ribosomal subunit.

The protein resides in the plastid. It localises to the chloroplast. The protein is Small ribosomal subunit protein uS3c (rps3) of Calycanthus floridus var. glaucus (Eastern sweetshrub).